The sequence spans 357 residues: Homoserine O-acetyltransferase (357 aa).

Positions N51–I340 constitute an AB hydrolase-1 domain. Catalysis depends on S147, which acts as the Nucleophile. Substrate is bound at residue R216. Catalysis depends on residues D306 and H335. A substrate-binding site is contributed by D336.

This sequence belongs to the AB hydrolase superfamily. MetX family. Homodimer.

The protein resides in the cytoplasm. The catalysed reaction is L-homoserine + acetyl-CoA = O-acetyl-L-homoserine + CoA. Its pathway is amino-acid biosynthesis; L-methionine biosynthesis via de novo pathway; O-acetyl-L-homoserine from L-homoserine: step 1/1. Functionally, transfers an acetyl group from acetyl-CoA to L-homoserine, forming acetyl-L-homoserine. In Chlorobium chlorochromatii (strain CaD3), this protein is Homoserine O-acetyltransferase.